The chain runs to 74 residues: ATP synthase subunit 9, mitochondrial (74 aa).

2 consecutive transmembrane segments (helical) span residues 8-28 (IGAG…GNVF) and 45-72 (LFGY…LILF).

It belongs to the ATPase C chain family. F-type ATPases have 2 components, CF(1) - the catalytic core - and CF(0) - the membrane proton channel. CF(1) has five subunits: alpha(3), beta(3), gamma(1), delta(1), epsilon(1). CF(0) has three main subunits: a, b and c.

The protein localises to the mitochondrion membrane. Functionally, this protein is one of the chains of the nonenzymatic membrane component (F0) of mitochondrial ATPase. The polypeptide is ATP synthase subunit 9, mitochondrial (ATP9) (Pisum sativum (Garden pea)).